Here is a 22-residue protein sequence, read N- to C-terminus: Fuctinin-2 (22 aa).

A disordered region spans residues 1–22 (ELPGLPKGEKEQQEAIEHIDEV). The span at 7 to 22 (KGEKEQQEAIEHIDEV) shows a compositional bias: basic and acidic residues.

To human SET/PHAPII protein. In terms of assembly, oligomer.

The protein localises to the cytoplasm. Has a role in the physiological regulation of fucosylation processes. The chain is Fuctinin-2 from Rattus norvegicus (Rat).